Here is a 475-residue protein sequence, read N- to C-terminus: Glycogen synthase (475 aa).

Lysine 15 serves as a coordination point for ADP-alpha-D-glucose.

It belongs to the glycosyltransferase 1 family. Bacterial/plant glycogen synthase subfamily.

The enzyme catalyses [(1-&gt;4)-alpha-D-glucosyl](n) + ADP-alpha-D-glucose = [(1-&gt;4)-alpha-D-glucosyl](n+1) + ADP + H(+). Its pathway is glycan biosynthesis; glycogen biosynthesis. In terms of biological role, synthesizes alpha-1,4-glucan chains using ADP-glucose. This is Glycogen synthase from Chlamydia caviae (strain ATCC VR-813 / DSM 19441 / 03DC25 / GPIC) (Chlamydophila caviae).